A 209-amino-acid chain; its full sequence is MRQHVNPLSKNFFEIDPIPPLNEVFENPQLPLHLDIGCASGDFLMELSLKNKNWNYIGIEIREKLVLNANLKIKNREYKNVYFSFGNAINILNNTNNKTLIDAITSISFYFPDPWFKKKHHKRRVIQPEFINLLSNAMRTRSLIFIKTDVQELFEYMELTILESLKFKKLAYEDFRVNESFNPIKTQTKREKYVLLSQFEIYESIYIRI.

S-adenosyl-L-methionine contacts are provided by Asp-35, Glu-60, Asn-87, and Asp-113. Residue Asp-113 is part of the active site. Lys-117 and Asp-149 together coordinate substrate.

It belongs to the class I-like SAM-binding methyltransferase superfamily. TrmB family.

The catalysed reaction is guanosine(46) in tRNA + S-adenosyl-L-methionine = N(7)-methylguanosine(46) in tRNA + S-adenosyl-L-homocysteine. It functions in the pathway tRNA modification; N(7)-methylguanine-tRNA biosynthesis. Catalyzes the formation of N(7)-methylguanine at position 46 (m7G46) in tRNA. The polypeptide is tRNA (guanine-N(7)-)-methyltransferase (Prochlorococcus marinus (strain MIT 9515)).